The sequence spans 121 residues: Large ribosomal subunit protein bL19 (121 aa).

Belongs to the bacterial ribosomal protein bL19 family.

In terms of biological role, this protein is located at the 30S-50S ribosomal subunit interface and may play a role in the structure and function of the aminoacyl-tRNA binding site. The sequence is that of Large ribosomal subunit protein bL19 from Amoebophilus asiaticus (strain 5a2).